The sequence spans 379 residues: Cytochrome b (379 aa).

4 helical membrane passes run 33–53 (FGSL…FLAM), 77–98 (WLIR…FIHV), 113–133 (WNIG…GYVL), and 178–198 (FFAF…VHLL). Positions 83 and 97 each coordinate heme b. 2 residues coordinate heme b: His182 and His196. Residue His201 coordinates a ubiquinone. 4 helical membrane passes run 226 to 246 (IKDL…ALFF), 288 to 308 (LGGV…PLLN), 320 to 340 (ITQT…WIGG), and 347 to 367 (FTMI…ILMP).

The protein belongs to the cytochrome b family. As to quaternary structure, the cytochrome bc1 complex contains 11 subunits: 3 respiratory subunits (MT-CYB, CYC1 and UQCRFS1), 2 core proteins (UQCRC1 and UQCRC2) and 6 low-molecular weight proteins (UQCRH/QCR6, UQCRB/QCR7, UQCRQ/QCR8, UQCR10/QCR9, UQCR11/QCR10 and a cleavage product of UQCRFS1). This cytochrome bc1 complex then forms a dimer. Heme b is required as a cofactor.

The protein localises to the mitochondrion inner membrane. Component of the ubiquinol-cytochrome c reductase complex (complex III or cytochrome b-c1 complex) that is part of the mitochondrial respiratory chain. The b-c1 complex mediates electron transfer from ubiquinol to cytochrome c. Contributes to the generation of a proton gradient across the mitochondrial membrane that is then used for ATP synthesis. The sequence is that of Cytochrome b (MT-CYB) from Akodon dolores (Dolorous grass mouse).